Consider the following 526-residue polypeptide: Outer capsid protein VP5 (526 aa).

Positions Met1–Glu42 are involved in membrane permeabilization.

The protein belongs to the orbivirus VP5 family.

Its subcellular location is the virion. In terms of biological role, VP5 protein is one of the two proteins (with VP2) which constitute the virus particle outer capsid. Acts as a membrane permeabilization protein that mediates release of viral particles from endosomal compartments into the cytoplasm. Permeabilization activity is probably negatively regulated by VP2 and is triggered by endosomal degradation of VP2 and exposure to low pH. This is Outer capsid protein VP5 (Segment-6) from Bluetongue virus 1 (isolate Australia) (BTV 1).